A 158-amino-acid polypeptide reads, in one-letter code: Eukaryotic translation initiation factor 5A (158 aa).

Lys-51 carries the hypusine modification.

The protein belongs to the eIF-5A family. In terms of processing, lys-51 undergoes hypusination, a unique post-translational modification that consists in the addition of a butylamino group from spermidine to lysine side chain, leading to the formation of the unusual amino acid hypusine. eIF-5As are the only known proteins to undergo this modification, which is essential for their function.

The protein localises to the cytoplasm. Functionally, translation factor that promotes translation elongation and termination, particularly upon ribosome stalling at specific amino acid sequence contexts. Binds between the exit (E) and peptidyl (P) site of the ribosome and promotes rescue of stalled ribosome: specifically required for efficient translation of polyproline-containing peptides as well as other motifs that stall the ribosome. Acts as a ribosome quality control (RQC) cofactor by joining the RQC complex to facilitate peptidyl transfer during CAT tailing step. In Candida albicans (strain SC5314 / ATCC MYA-2876) (Yeast), this protein is Eukaryotic translation initiation factor 5A (ANB1).